A 92-amino-acid polypeptide reads, in one-letter code: Small ribosomal subunit protein uS19c (92 aa).

The protein belongs to the universal ribosomal protein uS19 family.

The protein localises to the plastid. It is found in the chloroplast. Protein S19 forms a complex with S13 that binds strongly to the 16S ribosomal RNA. The protein is Small ribosomal subunit protein uS19c of Cyanidium caldarium (Red alga).